Here is a 390-residue protein sequence, read N- to C-terminus: Galactokinase (390 aa).

33–36 (EHTD) lines the substrate pocket. Residues Ser67 and 124 to 130 (GSGLSSS) contribute to the ATP site. Residues Ser130 and Glu162 each coordinate Mg(2+). Asp174 (proton acceptor) is an active-site residue. Substrate is bound at residue Tyr224.

This sequence belongs to the GHMP kinase family. GalK subfamily.

It is found in the cytoplasm. The enzyme catalyses alpha-D-galactose + ATP = alpha-D-galactose 1-phosphate + ADP + H(+). It participates in carbohydrate metabolism; galactose metabolism. Functionally, catalyzes the transfer of the gamma-phosphate of ATP to D-galactose to form alpha-D-galactose-1-phosphate (Gal-1-P). This Streptococcus suis (strain 05ZYH33) protein is Galactokinase.